A 136-amino-acid chain; its full sequence is Large ribosomal subunit protein uL16 (136 aa).

It belongs to the universal ribosomal protein uL16 family. Part of the 50S ribosomal subunit.

Its function is as follows. Binds 23S rRNA and is also seen to make contacts with the A and possibly P site tRNAs. This Rickettsia canadensis (strain McKiel) protein is Large ribosomal subunit protein uL16.